Consider the following 188-residue polypeptide: Ribonuclease HII (188 aa).

An RNase H type-2 domain is found at 6 to 188 (KPLCGIDEAG…VKGLDEPTLF (183 aa)). Aspartate 12, glutamate 13, and aspartate 99 together coordinate a divalent metal cation.

It belongs to the RNase HII family. Mn(2+) serves as cofactor. Requires Mg(2+) as cofactor.

It is found in the cytoplasm. It catalyses the reaction Endonucleolytic cleavage to 5'-phosphomonoester.. Endonuclease that specifically degrades the RNA of RNA-DNA hybrids. This Sulfurovum sp. (strain NBC37-1) protein is Ribonuclease HII.